We begin with the raw amino-acid sequence, 120 residues long: Large ribosomal subunit protein uL18 (120 aa).

Positions 1–22 are disordered; the sequence is MKTTRKESLKRRHRRIRRKVSG. The segment covering 8 to 20 has biased composition (basic residues); that stretch reads SLKRRHRRIRRKV.

This sequence belongs to the universal ribosomal protein uL18 family. Part of the 50S ribosomal subunit; part of the 5S rRNA/L5/L18/L25 subcomplex. Contacts the 5S and 23S rRNAs.

Its function is as follows. This is one of the proteins that bind and probably mediate the attachment of the 5S RNA into the large ribosomal subunit, where it forms part of the central protuberance. This is Large ribosomal subunit protein uL18 from Crocosphaera subtropica (strain ATCC 51142 / BH68) (Cyanothece sp. (strain ATCC 51142)).